The following is a 246-amino-acid chain: Proteasome subunit alpha (246 aa).

The protein belongs to the peptidase T1A family. As to quaternary structure, the 20S proteasome core is composed of 14 alpha and 14 beta subunits that assemble into four stacked heptameric rings, resulting in a barrel-shaped structure. The two inner rings, each composed of seven catalytic beta subunits, are sandwiched by two outer rings, each composed of seven alpha subunits. The catalytic chamber with the active sites is on the inside of the barrel. Has a gated structure, the ends of the cylinder being occluded by the N-termini of the alpha-subunits. Is capped by the proteasome-associated ATPase, ARC. Can also interact with the bacterial proteasome activator Bpa through the C-terminal hydrophobic-tyrosine-X motif (HbYX motif) of Bpa; Bpa forms a homooligomeric ring-like structure which stacks co-axially with the proteasomal alpha-rings. Pupylated at an undetermined lysine residue by the prokaryotic ubiquitin-like protein Pup with the help of the ligase PafA, which leads to its degradation by the proteasome and thereby constitutes a negative auto-regulation.

It localises to the cytoplasm. The protein operates within protein degradation; proteasomal Pup-dependent pathway. With respect to regulation, the formation of the proteasomal ATPase ARC-20S proteasome complex, likely via the docking of the C-termini of ARC into the intersubunit pockets in the alpha-rings, may trigger opening of the gate for substrate entry. Interconversion between the open-gate and close-gate conformations leads to a dynamic regulation of the 20S proteasome proteolysis activity. PPS auto-regulates its own activity via pupylation and degradation of its components. Peptidolytic activity is inhibited by N-acetyl-Leu-Leu-norleucinal (Ac-LLnL) in vitro. Functionally, component of the proteasome core, a large protease complex with broad specificity involved in protein degradation. The M.smegmatis proteasome is able to cleave oligopeptides after hydrophobic residues, thus displaying chymotrypsin-like activity. In complex with the ATPase Mpa, degrades protein targets conjugated to a prokaryotic ubiquitin-like protein (Pup). Identified substrates of the M.smegmatis proteasome are the pupylated SodA and Ino1 proteins. The Pup-proteasome system (PPS) is essential for survival under starvation; PPS likely functions to recycle amino acids under nitrogen starvation, thereby enabling the cell to maintain basal metabolic activities. The chain is Proteasome subunit alpha from Mycolicibacterium smegmatis (strain ATCC 700084 / mc(2)155) (Mycobacterium smegmatis).